The primary structure comprises 537 residues: Phenylalanine--tRNA ligase beta subunit (537 aa).

The B5 domain maps to 268-343 (FNFRPYRLNL…KSYGIENVRE (76 aa)). Residues aspartate 321, aspartate 327, glutamate 330, and aspartate 331 each coordinate Mg(2+).

It belongs to the phenylalanyl-tRNA synthetase beta subunit family. Type 2 subfamily. In terms of assembly, tetramer of two alpha and two beta subunits. The cofactor is Mg(2+).

Its subcellular location is the cytoplasm. It carries out the reaction tRNA(Phe) + L-phenylalanine + ATP = L-phenylalanyl-tRNA(Phe) + AMP + diphosphate + H(+). This Thermoplasma volcanium (strain ATCC 51530 / DSM 4299 / JCM 9571 / NBRC 15438 / GSS1) protein is Phenylalanine--tRNA ligase beta subunit.